The following is a 393-amino-acid chain: Alpha-pyrone synthesis polyketide synthase-like Pks18 (393 aa).

Residues 1-26 (MNVSAESGAPRRAGQRHEVGLAQLPP) are disordered. Cys-175 functions as the Nucleophile in the catalytic mechanism. His-221 is a substrate binding site.

Belongs to the thiolase-like superfamily. Chalcone/stilbene synthases family. As to quaternary structure, homodimer.

The protein operates within lipid metabolism; fatty acid biosynthesis. Functionally, involved in the biosynthesis of tri- and tetraketide alpha-pyrones. Pks18 catalyzes the extension of medium- and long-chain aliphatic acyl-CoA substrates by using malonyl-CoA as an extender molecule to synthesize polyketide products. The chain is Alpha-pyrone synthesis polyketide synthase-like Pks18 (pks18) from Mycobacterium bovis (strain ATCC BAA-935 / AF2122/97).